Reading from the N-terminus, the 700-residue chain is Methionine--tRNA ligase (700 aa).

Residues 12–22 carry the 'HIGH' region motif; the sequence is PYANGNFHIGH. The Zn(2+) site is built by Cys-143, Cys-146, Cys-156, and Cys-159. The 'KMSKS' region signature appears at 348-352; the sequence is KMSKS. Residue Lys-351 coordinates ATP. The tRNA-binding domain maps to 594–700; it reads DFSKIDLRIA…AGAQPGMRVH (107 aa).

The protein belongs to the class-I aminoacyl-tRNA synthetase family. MetG type 1 subfamily. In terms of assembly, homodimer. The cofactor is Zn(2+).

It is found in the cytoplasm. It catalyses the reaction tRNA(Met) + L-methionine + ATP = L-methionyl-tRNA(Met) + AMP + diphosphate. In terms of biological role, is required not only for elongation of protein synthesis but also for the initiation of all mRNA translation through initiator tRNA(fMet) aminoacylation. This is Methionine--tRNA ligase from Albidiferax ferrireducens (strain ATCC BAA-621 / DSM 15236 / T118) (Rhodoferax ferrireducens).